The following is a 136-amino-acid chain: ATP synthase epsilon chain (136 aa).

Belongs to the ATPase epsilon chain family. In terms of assembly, F-type ATPases have 2 components, CF(1) - the catalytic core - and CF(0) - the membrane proton channel. CF(1) has five subunits: alpha(3), beta(3), gamma(1), delta(1), epsilon(1). CF(0) has three main subunits: a, b and c.

The protein localises to the cell inner membrane. Its function is as follows. Produces ATP from ADP in the presence of a proton gradient across the membrane. The protein is ATP synthase epsilon chain of Hydrogenobaculum sp. (strain Y04AAS1).